Here is a 183-residue protein sequence, read N- to C-terminus: Somatotropin (183 aa).

Position 19 (His19) interacts with Zn(2+). Positions 38–67 (EEQRHSHKSSPSAFCQSETIPAPTGKEDAQ) are disordered. The span at 46–56 (SSPSAFCQSET) shows a compositional bias: polar residues. A disulfide bond links Cys52 and Cys156. Glu165 is a binding site for Zn(2+). The cysteines at positions 173 and 181 are disulfide-linked.

It belongs to the somatotropin/prolactin family.

It is found in the secreted. Functionally, growth hormone plays an important role in growth control and is involved in the regulation of several anabolic processes. Implicated as an osmoregulatory substance important for seawater adaptation. The chain is Somatotropin (gh) from Prionace glauca (Blue shark).